The primary structure comprises 647 residues: Threonine--tRNA ligase (647 aa).

The 61-residue stretch at 1–61 folds into the TGS domain; sequence MIKITFPDGA…TEDGSIEIVT (61 aa). The segment at 242-540 is catalytic; sequence DHRKLGKELD…LIENYKGAFP (299 aa). Zn(2+) is bound by residues cysteine 336, histidine 387, and histidine 517.

Belongs to the class-II aminoacyl-tRNA synthetase family. Homodimer. Requires Zn(2+) as cofactor.

The protein localises to the cytoplasm. It catalyses the reaction tRNA(Thr) + L-threonine + ATP = L-threonyl-tRNA(Thr) + AMP + diphosphate + H(+). In terms of biological role, catalyzes the attachment of threonine to tRNA(Thr) in a two-step reaction: L-threonine is first activated by ATP to form Thr-AMP and then transferred to the acceptor end of tRNA(Thr). Also edits incorrectly charged L-seryl-tRNA(Thr). This chain is Threonine--tRNA ligase, found in Streptococcus gordonii (strain Challis / ATCC 35105 / BCRC 15272 / CH1 / DL1 / V288).